A 47-amino-acid chain; its full sequence is Putative heat shock protein HSP90 (47 aa).

Arg47 contributes to the ATP binding site.

It belongs to the heat shock protein 90 family. Homodimer.

Its subcellular location is the cytoplasm. Its function is as follows. Putative molecular chaperone that may promote the maturation, structural maintenance and proper regulation of specific target proteins. This chain is Putative heat shock protein HSP90, found in Populus euphratica (Euphrates poplar).